The chain runs to 432 residues: Trigger factor (432 aa).

In terms of domain architecture, PPIase FKBP-type spans 163 to 248 (GDIAVIDFEG…LKALNKKELP (86 aa)).

Belongs to the FKBP-type PPIase family. Tig subfamily.

It localises to the cytoplasm. The catalysed reaction is [protein]-peptidylproline (omega=180) = [protein]-peptidylproline (omega=0). Involved in protein export. Acts as a chaperone by maintaining the newly synthesized protein in an open conformation. Functions as a peptidyl-prolyl cis-trans isomerase. The chain is Trigger factor from Thermoanaerobacter pseudethanolicus (strain ATCC 33223 / 39E) (Clostridium thermohydrosulfuricum).